We begin with the raw amino-acid sequence, 327 residues long: uncharacterized protein (327 aa).

Residues 266 to 285 (IGLLAAGSVALTSLCHLLCY) traverse the membrane as a helical segment. Positions 297–327 (EEENEAAEETAAGEASAVAAAAVSEEEQQRE) are disordered. The segment covering 305–319 (ETAAGEASAVAAAAV) has biased composition (low complexity).

It belongs to the HHV-5 UL14 protein family.

The protein resides in the host membrane. This is an uncharacterized protein from Human cytomegalovirus (strain Merlin) (HHV-5).